A 260-amino-acid polypeptide reads, in one-letter code: Tryptophan synthase alpha chain (260 aa).

Residues E52 and D63 each act as proton acceptor in the active site.

It belongs to the TrpA family. In terms of assembly, tetramer of two alpha and two beta chains.

It catalyses the reaction (1S,2R)-1-C-(indol-3-yl)glycerol 3-phosphate + L-serine = D-glyceraldehyde 3-phosphate + L-tryptophan + H2O. The protein operates within amino-acid biosynthesis; L-tryptophan biosynthesis; L-tryptophan from chorismate: step 5/5. In terms of biological role, the alpha subunit is responsible for the aldol cleavage of indoleglycerol phosphate to indole and glyceraldehyde 3-phosphate. This Streptococcus thermophilus (strain ATCC BAA-491 / LMD-9) protein is Tryptophan synthase alpha chain.